A 150-amino-acid chain; its full sequence is Large ribosomal subunit protein bL9 (150 aa).

Belongs to the bacterial ribosomal protein bL9 family.

In terms of biological role, binds to the 23S rRNA. The chain is Large ribosomal subunit protein bL9 from Shewanella woodyi (strain ATCC 51908 / MS32).